We begin with the raw amino-acid sequence, 178 residues long: Large ribosomal subunit protein uL10 (178 aa).

This sequence belongs to the universal ribosomal protein uL10 family. In terms of assembly, part of the ribosomal stalk of the 50S ribosomal subunit. The N-terminus interacts with L11 and the large rRNA to form the base of the stalk. The C-terminus forms an elongated spine to which L12 dimers bind in a sequential fashion forming a multimeric L10(L12)X complex.

Functionally, forms part of the ribosomal stalk, playing a central role in the interaction of the ribosome with GTP-bound translation factors. In Gloeothece citriformis (strain PCC 7424) (Cyanothece sp. (strain PCC 7424)), this protein is Large ribosomal subunit protein uL10.